Consider the following 534-residue polypeptide: T-complex protein 1 subunit gamma (534 aa).

Methionine 1 carries the N-acetylmethionine modification. The residue at position 257 (serine 257) is a Phosphoserine. Cysteine 371 and cysteine 377 are disulfide-bonded.

Belongs to the TCP-1 chaperonin family. As to quaternary structure, heterooligomeric complex of about 850 to 900 kDa that forms two stacked rings, 12 to 16 nm in diameter.

It localises to the cytoplasm. Molecular chaperone; assists the folding of proteins upon ATP hydrolysis. Known to play a role, in vitro, in the folding of actin and tubulin. In yeast may play a role in mitotic spindle formation. The polypeptide is T-complex protein 1 subunit gamma (CCT3) (Saccharomyces cerevisiae (strain ATCC 204508 / S288c) (Baker's yeast)).